The sequence spans 225 residues: Thymidine kinase (225 aa).

Residue 15-22 (GSMFSGKT) participates in ATP binding. The interval 85-110 (KKQNHRTTTQCRSGDGTNNPGGVIPS) is disordered. The segment covering 90-104 (RTTTQCRSGDGTNNP) has biased composition (polar residues). An ATP-binding site is contributed by 121 to 124 (DEAN). Residue glutamate 122 is the Proton acceptor of the active site. Cysteine 178, cysteine 181, cysteine 216, and cysteine 219 together coordinate Zn(2+).

Belongs to the thymidine kinase family. Homotetramer.

It is found in the cytoplasm. It carries out the reaction thymidine + ATP = dTMP + ADP + H(+). In Haloquadratum walsbyi (strain DSM 16790 / HBSQ001), this protein is Thymidine kinase.